The primary structure comprises 261 residues: Probable electron transfer flavoprotein subunit beta (261 aa).

An N-acetylserine modification is found at Ser-2.

The protein belongs to the ETF beta-subunit/FixA family. Heterodimer of an alpha and a beta subunit. Interacts with YFH1. It depends on FAD as a cofactor. The cofactor is AMP.

The protein resides in the mitochondrion matrix. In terms of biological role, the electron transfer flavoprotein serves as a specific electron acceptor for several dehydrogenases, including five acyl-CoA dehydrogenases, glutaryl-CoA and sarcosine dehydrogenase. It transfers the electrons to the main mitochondrial respiratory chain via ETF-ubiquinone oxidoreductase (ETF dehydrogenase). This is Probable electron transfer flavoprotein subunit beta (CIR1) from Saccharomyces cerevisiae (strain ATCC 204508 / S288c) (Baker's yeast).